Here is a 98-residue protein sequence, read N- to C-terminus: Prolactin-releasing peptide (98 aa).

An N-terminal signal peptide occupies residues 1–22 (MKAVGAWLLCLLLLGLALQGAA). Disordered stretches follow at residues 52 to 71 (RFGRRRAAPGDGPRPGPRRV) and 79 to 98 (GGAEPSRALPGRLTAQLVQE). Residue F53 is modified to Phenylalanine amide. The propeptide occupies 58 to 98 (AAPGDGPRPGPRRVPACFRLEGGAEPSRALPGRLTAQLVQE).

Amidation of C-terminus is required for receptor interaction. As to expression, medulla oblongata and hypothalamus.

The protein resides in the secreted. Its function is as follows. Stimulates prolactin (PRL) release and regulates the expression of prolactin through its receptor GPR10. May stimulate lactotrophs directly to secrete PRL. The protein is Prolactin-releasing peptide (PRLH) of Bos taurus (Bovine).